A 229-amino-acid polypeptide reads, in one-letter code: Flagellar L-ring protein (229 aa).

The signal sequence occupies residues 1–20 (MLKTVLRLPVCAALLALAAG). Cys-21 carries the N-palmitoyl cysteine lipid modification. Cys-21 carries S-diacylglycerol cysteine lipidation.

It belongs to the FlgH family. As to quaternary structure, the basal body constitutes a major portion of the flagellar organelle and consists of four rings (L,P,S, and M) mounted on a central rod.

It is found in the cell outer membrane. Its subcellular location is the bacterial flagellum basal body. Functionally, assembles around the rod to form the L-ring and probably protects the motor/basal body from shearing forces during rotation. The protein is Flagellar L-ring protein of Bordetella pertussis (strain Tohama I / ATCC BAA-589 / NCTC 13251).